A 235-amino-acid chain; its full sequence is tRNA pseudouridine synthase B (235 aa).

Residue D45 is the Nucleophile of the active site.

The protein belongs to the pseudouridine synthase TruB family. Type 1 subfamily.

It catalyses the reaction uridine(55) in tRNA = pseudouridine(55) in tRNA. Responsible for synthesis of pseudouridine from uracil-55 in the psi GC loop of transfer RNAs. The polypeptide is tRNA pseudouridine synthase B (Chlamydia abortus (strain DSM 27085 / S26/3) (Chlamydophila abortus)).